The following is a 454-amino-acid chain: Glutamyl-tRNA reductase (454 aa).

Residues 49 to 52 (TCNR), serine 109, 114 to 116 (ETQ), and glutamine 120 contribute to the substrate site. The active-site Nucleophile is the cysteine 50. Residue 189–194 (GAGKMS) coordinates NADP(+). Over residues 432–442 (DHAEQSWKEGQ) the composition is skewed to basic and acidic residues. The tract at residues 432-454 (DHAEQSWKEGQRPSLNQGMALRT) is disordered.

This sequence belongs to the glutamyl-tRNA reductase family. As to quaternary structure, homodimer.

It carries out the reaction (S)-4-amino-5-oxopentanoate + tRNA(Glu) + NADP(+) = L-glutamyl-tRNA(Glu) + NADPH + H(+). It functions in the pathway porphyrin-containing compound metabolism; protoporphyrin-IX biosynthesis; 5-aminolevulinate from L-glutamyl-tRNA(Glu): step 1/2. Functionally, catalyzes the NADPH-dependent reduction of glutamyl-tRNA(Glu) to glutamate 1-semialdehyde (GSA). The chain is Glutamyl-tRNA reductase from Shouchella clausii (strain KSM-K16) (Alkalihalobacillus clausii).